Consider the following 288-residue polypeptide: Shikimate kinase (288 aa).

Residue 81–91 coordinates ATP; it reads PVASGLKSSSA.

This sequence belongs to the GHMP kinase family. Archaeal shikimate kinase subfamily.

The protein resides in the cytoplasm. The enzyme catalyses shikimate + ATP = 3-phosphoshikimate + ADP + H(+). The protein operates within metabolic intermediate biosynthesis; chorismate biosynthesis; chorismate from D-erythrose 4-phosphate and phosphoenolpyruvate: step 5/7. This Methanothrix thermoacetophila (strain DSM 6194 / JCM 14653 / NBRC 101360 / PT) (Methanosaeta thermophila) protein is Shikimate kinase.